The primary structure comprises 398 residues: 4-hydroxy-3-methylbut-2-enyl diphosphate reductase (398 aa).

Position 66 (C66) interacts with [4Fe-4S] cluster. H96 is a binding site for (2E)-4-hydroxy-3-methylbut-2-enyl diphosphate. H96 serves as a coordination point for dimethylallyl diphosphate. H96 contributes to the isopentenyl diphosphate binding site. A [4Fe-4S] cluster-binding site is contributed by C157. H185 provides a ligand contact to (2E)-4-hydroxy-3-methylbut-2-enyl diphosphate. Residue H185 coordinates dimethylallyl diphosphate. Residue H185 coordinates isopentenyl diphosphate. E187 acts as the Proton donor in catalysis. A (2E)-4-hydroxy-3-methylbut-2-enyl diphosphate-binding site is contributed by T250. C288 is a [4Fe-4S] cluster binding site. Positions 317, 318, 319, and 380 each coordinate (2E)-4-hydroxy-3-methylbut-2-enyl diphosphate. The dimethylallyl diphosphate site is built by S317, S318, N319, and S380. Residues S317, S318, N319, and S380 each contribute to the isopentenyl diphosphate site.

It belongs to the IspH family. [4Fe-4S] cluster is required as a cofactor.

It carries out the reaction isopentenyl diphosphate + 2 oxidized [2Fe-2S]-[ferredoxin] + H2O = (2E)-4-hydroxy-3-methylbut-2-enyl diphosphate + 2 reduced [2Fe-2S]-[ferredoxin] + 2 H(+). The catalysed reaction is dimethylallyl diphosphate + 2 oxidized [2Fe-2S]-[ferredoxin] + H2O = (2E)-4-hydroxy-3-methylbut-2-enyl diphosphate + 2 reduced [2Fe-2S]-[ferredoxin] + 2 H(+). Its pathway is isoprenoid biosynthesis; dimethylallyl diphosphate biosynthesis; dimethylallyl diphosphate from (2E)-4-hydroxy-3-methylbutenyl diphosphate: step 1/1. It participates in isoprenoid biosynthesis; isopentenyl diphosphate biosynthesis via DXP pathway; isopentenyl diphosphate from 1-deoxy-D-xylulose 5-phosphate: step 6/6. In terms of biological role, catalyzes the conversion of 1-hydroxy-2-methyl-2-(E)-butenyl 4-diphosphate (HMBPP) into a mixture of isopentenyl diphosphate (IPP) and dimethylallyl diphosphate (DMAPP). Acts in the terminal step of the DOXP/MEP pathway for isoprenoid precursor biosynthesis. This is 4-hydroxy-3-methylbut-2-enyl diphosphate reductase from Prochlorococcus marinus (strain AS9601).